Consider the following 469-residue polypeptide: Serine/threonine-protein kinases PknA (469 aa).

The region spanning 20–281 (YRLQWIIGHG…NEMALAVSAV (262 aa)) is the Protein kinase domain. ATP contacts are provided by residues 26-34 (IGHGGMSTV) and lysine 49. Aspartate 148 (proton acceptor) is an active-site residue. 2 disordered regions span residues 286-307 (RPPQ…PSES) and 359-454 (FNDT…PADD). Composition is skewed to low complexity over residues 365–384 (ETTT…EETT) and 399–413 (TEPE…TSEE). A compositionally biased stretch (polar residues) spans 430–443 (VPQIPTSTPRTSAS).

The protein belongs to the protein kinase superfamily. Ser/Thr protein kinase family.

The catalysed reaction is L-seryl-[protein] + ATP = O-phospho-L-seryl-[protein] + ADP + H(+). The enzyme catalyses L-threonyl-[protein] + ATP = O-phospho-L-threonyl-[protein] + ADP + H(+). In Corynebacterium glutamicum (strain ATCC 13032 / DSM 20300 / JCM 1318 / BCRC 11384 / CCUG 27702 / LMG 3730 / NBRC 12168 / NCIMB 10025 / NRRL B-2784 / 534), this protein is Serine/threonine-protein kinases PknA (pknA).